The primary structure comprises 359 residues: Spore germination protein GerQC (359 aa).

Positions 1–16 are cleaved as a signal peptide; the sequence is MKRWILFLILSVFLIG. Cys-17 carries the N-palmitoyl cysteine lipid modification. Cys-17 carries the S-diacylglycerol cysteine lipid modification.

This sequence belongs to the GerABKC lipoprotein family.

The protein resides in the membrane. Required for the germination response to inosine. Has no role in L-alanine germination. The polypeptide is Spore germination protein GerQC (gerQC) (Bacillus cereus).